We begin with the raw amino-acid sequence, 501 residues long: Sucrose transport protein SUT2 (501 aa).

The Cytoplasmic segment spans residues 1–31 (MPRRPSGGGGGAGPAAAAVRKVPLRKLLRAA). The chain crosses the membrane as a helical span at residues 32-52 (SVACGVQFGWALQLSLLTPYV). Over 53-55 (QEL) the chain is Extracellular. A helical transmembrane segment spans residues 56-76 (GIPHAFASLVWLCGPLSGLLV). At 77–98 (QPLVGHLSDRIAPAASPLGRRR) the chain is on the cytoplasmic side. Residues 99 to 119 (PFIAAGAASIAAAVLTVGFSA) form a helical membrane-spanning segment. Over 120-135 (DLGRIFGDSITPGSTR) the chain is Extracellular. The chain crosses the membrane as a helical span at residues 136–156 (LGAIIVYLVGFWLLDVGNNAT). Residues 157-176 (QGPCRAFLADLTENDPRRTR) are Cytoplasmic-facing. A helical membrane pass occupies residues 177 to 197 (IANAYFSLFMALGNILGYATG). At 198–222 (AYSGWYKIFPFTVTPSCSISCANLK) the chain is on the extracellular side. A helical membrane pass occupies residues 223–243 (SAFLLDIIILVVTTCITVASV). At 244–278 (QEPQSLGSDEADHPSTEQEAFLWELFGSFRYFTLP) the chain is on the cytoplasmic side. The helical transmembrane segment at 279-299 (VWMVLIVTALTWIGWFPFILF) threads the bilayer. Topologically, residues 300–327 (DTDWMGREIYRGSPDDPSITQSYHDGVR) are extracellular. The helical transmembrane segment at 328–348 (MGSFGLMLNSVLLGFTSIVLE) threads the bilayer. Residues 349–356 (KLCRKWGA) lie on the Cytoplasmic side of the membrane. A helical membrane pass occupies residues 357–377 (GLVWGVSNILMALCFVAMLVI). At 378 to 394 (TYVAKNMDYPPSGVPPT) the chain is on the extracellular side. Residues 395–415 (GIVIASLVVFTILGAPLAITY) traverse the membrane as a helical segment. The Cytoplasmic segment spans residues 416-433 (SIPYAMAASRVENLGLGQ). A helical transmembrane segment spans residues 434 to 454 (GLAMGILNLAIVIPQVIVSLG). The Extracellular segment spans residues 455–467 (SGPWDQLFGGGNA). The chain crosses the membrane as a helical span at residues 468 to 488 (PAFAVAAAASFIGGLVAILGL). Residues 489–501 (PRARIASRRRGHR) are Cytoplasmic-facing.

The protein belongs to the glycoside-pentoside-hexuronide (GPH) cation symporter transporter (TC 2.A.2.4) family. Homodimer. In terms of tissue distribution, expressed in source leaf blades.

It is found in the cell membrane. It participates in glycan biosynthesis; sucrose metabolism. In terms of biological role, responsible for the transport of sucrose into the cell, with the concomitant uptake of protons (symport system). May also transport other glucosides. The protein is Sucrose transport protein SUT2 (SUT2) of Oryza sativa subsp. indica (Rice).